An 86-amino-acid polypeptide reads, in one-letter code: Large ribosomal subunit protein bL35m (86 aa).

The N-terminal 18 residues, 1 to 18 (MLVVFQRVVRATVLVGRK), are a transit peptide targeting the mitochondrion. The interval 45-69 (RKHAGAQHLNRDTSSSTRARQRQWE) is disordered.

Belongs to the bacterial ribosomal protein bL35 family. Component of the mitochondrial large ribosomal subunit (mt-LSU). Mature yeast 74S mitochondrial ribosomes consist of a small (37S) and a large (54S) subunit. The 37S small subunit contains a 15S ribosomal RNA (15S mt-rRNA) and at least 32 different proteins. The 54S large subunit contains a 21S rRNA (21S mt-rRNA) and at least 45 different proteins.

The protein localises to the mitochondrion. In terms of biological role, component of the mitochondrial ribosome (mitoribosome), a dedicated translation machinery responsible for the synthesis of mitochondrial genome-encoded proteins, including at least some of the essential transmembrane subunits of the mitochondrial respiratory chain. The mitoribosomes are attached to the mitochondrial inner membrane and translation products are cotranslationally integrated into the membrane. The protein is Large ribosomal subunit protein bL35m (new15) of Schizosaccharomyces pombe (strain 972 / ATCC 24843) (Fission yeast).